We begin with the raw amino-acid sequence, 820 residues long: Pentatricopeptide repeat-containing protein At3g22150, chloroplastic (820 aa).

The disordered stretch occupies residues methionine 1–isoleucine 42. The N-terminal 50 residues, methionine 1 to cysteine 50, are a transit peptide targeting the chloroplast. The span at asparagine 22 to isoleucine 42 shows a compositional bias: polar residues. 17 PPR repeats span residues threonine 69–threonine 99, aspartate 106–cysteine 136, serine 141–lysine 177, asparagine 178–proline 212, serine 213–tyrosine 247, aspartate 250–valine 284, tryptophan 285–serine 316, aspartate 317–asparagine 347, proline 352–arginine 382, aspartate 383–isoleucine 417, aspartate 418–phenylalanine 452, aspartate 485–proline 519, asparagine 520–glutamine 550, asparagine 555–arginine 585, asparagine 586–proline 620, aspartate 621–valine 651, and serine 657–alanine 691. The type E motif stretch occupies residues leucine 693–alanine 770. The segment at glycine 771–arginine 801 is type E(+) motif.

The protein belongs to the PPR family. PCMP-E subfamily.

Its subcellular location is the plastid. It is found in the chloroplast. The polypeptide is Pentatricopeptide repeat-containing protein At3g22150, chloroplastic (PCMP-E95) (Arabidopsis thaliana (Mouse-ear cress)).